The following is a 250-amino-acid chain: Uracil-DNA glycosylase (250 aa).

D91 serves as the catalytic Proton acceptor.

It belongs to the uracil-DNA glycosylase (UDG) superfamily. UNG family.

It localises to the host nucleus. The enzyme catalyses Hydrolyzes single-stranded DNA or mismatched double-stranded DNA and polynucleotides, releasing free uracil.. Excises uracil residues from the DNA which can arise as a result of misincorporation of dUMP residues by DNA polymerase or due to deamination of cytosine. Functionally, excises uracil residues from the DNA which can arise as a result of misincorporation of dUMP residues by DNA polymerase or deamination of cytosines. Therefore may reduce deleterious uracil incorporation into the viral genome, particularly in terminally differentiated cells which lack DNA repair enzymes. The chain is Uracil-DNA glycosylase (UL114) from Homo sapiens (Human).